The primary structure comprises 199 residues: Chaperone protein TorD (199 aa).

It belongs to the TorD/DmsD family. TorD subfamily.

Its subcellular location is the cytoplasm. In terms of biological role, involved in the biogenesis of TorA. Acts on TorA before the insertion of the molybdenum cofactor and, as a result, probably favors a conformation of the apoenzyme that is competent for acquiring the cofactor. The polypeptide is Chaperone protein TorD (Actinobacillus pleuropneumoniae serotype 7 (strain AP76)).